Reading from the N-terminus, the 330-residue chain is Type II restriction enzyme Cfr9I (330 aa).

It belongs to the XcyI type II restriction endonuclease family. The cofactor is Mg(2+).

The enzyme catalyses Endonucleolytic cleavage of DNA to give specific double-stranded fragments with terminal 5'-phosphates.. In terms of biological role, an E and P subtype restriction enzyme that recognizes the double-stranded sequence 5'-CCCGGG-3' and cleaves after C-1. This chain is Type II restriction enzyme Cfr9I (cfr9IR), found in Citrobacter freundii.